A 249-amino-acid polypeptide reads, in one-letter code: Electron transfer flavoprotein subunit beta (249 aa).

The protein belongs to the ETF beta-subunit/FixA family. Heterodimer of an alpha and a beta subunit. FAD serves as cofactor. Requires AMP as cofactor.

Its function is as follows. The electron transfer flavoprotein serves as a specific electron acceptor for other dehydrogenases. It transfers the electrons to the main respiratory chain via ETF-ubiquinone oxidoreductase (ETF dehydrogenase). This chain is Electron transfer flavoprotein subunit beta (etfB), found in Pseudomonas aeruginosa (strain ATCC 15692 / DSM 22644 / CIP 104116 / JCM 14847 / LMG 12228 / 1C / PRS 101 / PAO1).